Consider the following 364-residue polypeptide: Alanine racemase (364 aa).

The Proton acceptor; specific for D-alanine role is filled by Lys35. Position 35 is an N6-(pyridoxal phosphate)lysine (Lys35). Arg132 serves as a coordination point for substrate. The active-site Proton acceptor; specific for L-alanine is Tyr260. Met308 lines the substrate pocket.

Belongs to the alanine racemase family. Pyridoxal 5'-phosphate is required as a cofactor.

The enzyme catalyses L-alanine = D-alanine. The protein operates within amino-acid biosynthesis; D-alanine biosynthesis; D-alanine from L-alanine: step 1/1. Its function is as follows. Catalyzes the interconversion of L-alanine and D-alanine. May also act on other amino acids. This chain is Alanine racemase (alr), found in Acidithiobacillus ferrooxidans (strain ATCC 23270 / DSM 14882 / CIP 104768 / NCIMB 8455) (Ferrobacillus ferrooxidans (strain ATCC 23270)).